The following is a 396-amino-acid chain: MGAPSALPLLLLLACSWAPGGANLSQDDSQPWTSDETVVAGGTVVLKCQVKDHEDSSLQWSNPAQQTLYFGEKRALRDNRIQLVSSTPHELSISISNVALADEGEYTCSIFTMPVRTAKSLVTVLGIPQKPIITGYKSSLREKETATLNCQSSGSKPAAQLTWRKGDQELHGDQTRIQEDPNGKTFTVSSSVSFQVTREDDGANIVCSVNHESLKGADRSTSQRIEVLYTPTAMIRPEPAHPREGQKLLLHCEGRGNPVPQQYVWVKEGSEPPLKMTQESALIFPFLNKSDSGTYGCTATSNMGSYTAYFTLNVNDPSPVPSSSSTYHAIIGGIVAFIVFLLLILLIFLGHYLIRHKGTYLTHEAKGSDDAPDADTAIINAEGGQSGGDDKKEYFI.

Residues 1 to 22 form the signal peptide; it reads MGAPSALPLLLLLACSWAPGGA. The Ig-like V-type domain maps to 23–124; that stretch reads NLSQDDSQPW…VRTAKSLVTV (102 aa). At 23-328 the chain is on the extracellular side; it reads NLSQDDSQPW…PVPSSSSTYH (306 aa). 3 cysteine pairs are disulfide-bonded: Cys48/Cys108, Cys150/Cys207, and Cys252/Cys297. 2 Ig-like C2-type domains span residues 128–226 and 231–313; these read PQKP…QRIE and PTAM…FTLN. A glycan (N-linked (GlcNAc...) asparagine) is linked at Asn288. The chain crosses the membrane as a helical span at residues 329-349; the sequence is AIIGGIVAFIVFLLLILLIFL. Over 350-396 the chain is Cytoplasmic; that stretch reads GHYLIRHKGTYLTHEAKGSDDAPDADTAIINAEGGQSGGDDKKEYFI. Residues 365–396 are disordered; the sequence is AKGSDDAPDADTAIINAEGGQSGGDDKKEYFI. Position 386 is a phosphoserine (Ser386).

The protein belongs to the nectin family. In terms of assembly, homodimer. Can form trans-heterodimers with NECTIN3. Interacts with EPB41L1, DLG3, PALS2 and CASK. As to expression, mainly expressed in brain, in neuronal cell bodies of cerebellum, cortex, hippocampus, hypothalamus and spinal cord. In spinal cord predominantly expressed in motor neurons. Expressed in axons, presynaptic nerve terminals, glia cell processes.

It localises to the cell membrane. Its subcellular location is the cell junction. Functionally, involved in cell-cell adhesion. Has both calcium-independent homophilic cell-cell adhesion activity and calcium-independent heterophilic cell-cell adhesion activity with IGSF4, NECTIN1 and NECTIN3. Interaction with EPB41L1 may regulate structure or function of cell-cell junctions. This is Cell adhesion molecule 3 (Cadm3) from Mus musculus (Mouse).